We begin with the raw amino-acid sequence, 126 residues long: Protein chibby homolog 1 (126 aa).

The segment covering 1-10 (MPFFGNTFSP) has biased composition (polar residues). Residues 1 to 26 (MPFFGNTFSPKKTPPRKSASLSNLHS) are disordered. Residues Ser-9 and Ser-20 each carry the phosphoserine modification. The tract at residues 60 to 112 (IAETGVSGGVDRREVQRLRRRNQQLEEENNLLRLKVDILLDMLSESTAESHLM) is minimal region for the interaction with PKD2. Positions 67–125 (GGVDRREVQRLRRRNQQLEEENNLLRLKVDILLDMLSESTAESHLMEKELDELRISRKR) form a coiled coil. The leucine-zipper; mediates homodimerization stretch occupies residues 77 to 98 (LRRRNQQLEEENNLLRLKVDIL).

This sequence belongs to the chibby family. As to quaternary structure, homodimer. Homodimerization is essential for nuclear localization and interaction with KPNA4 but is dispensable for interaction with CTNNB1. Interacts with polycystin-2/PKD2 and GM130. Interacts with the C-terminal region of CTNNB1. Interacts (C-terminus) with TCIM (C-terminus), TCIM competes with CTNNB1 for the interaction with CBY1. Interacts with FAM92A; this interaction facilitates targeting of FAM92A to cilium basal body. Interacts with CIBAR2. Interacts with KPNA4. Widely expressed. Expressed at higher levels in heart, skeletal muscle, kidney and placenta. Also found in brain, lung, liver and testis. Significantly down-regulated in thyroid and metastatic uterine tumors.

The protein resides in the nucleus speckle. Its subcellular location is the cytoplasm. It localises to the cytoskeleton. The protein localises to the cilium basal body. It is found in the microtubule organizing center. The protein resides in the centrosome. Its subcellular location is the centriole. It localises to the golgi apparatus. The protein localises to the trans-Golgi network. It is found in the cell projection. The protein resides in the cilium. Its subcellular location is the flagellum. It localises to the nucleus. In terms of biological role, inhibits the Wnt/Wingless pathway by binding to CTNNB1/beta-catenin and inhibiting beta-catenin-mediated transcriptional activation through competition with TCF/LEF transcription factors. Has also been shown to play a role in regulating the intracellular trafficking of polycystin-2/PKD2 and possibly of other intracellular proteins. Promotes adipocyte and cardiomyocyte differentiation. This is Protein chibby homolog 1 (CBY1) from Homo sapiens (Human).